A 265-amino-acid polypeptide reads, in one-letter code: WUSCHEL-related homeobox 3B (265 aa).

The segment at residues 4 to 68 (TPSTRWCPTP…NHKARERQRL (65 aa)) is a DNA-binding region (homeobox; WUS-type). 2 disordered regions span residues 77-107 (QQQY…APPA) and 242-265 (PTKS…TSTN). Over residues 254–265 (SSKSSSCSTSTN) the composition is skewed to low complexity.

This sequence belongs to the WUS homeobox family. Predominantly expressed in tissues enriched for shoot meristems and young lateral organ primordia. First expressed in lateral domains of shoot meristems. It is then expressed in the margins of young lateral organ primordia. Not expressed in roots, seedling leaves or fully expanded coleoptiles. Also expressed in vegetative shoot apices (five leaf primordia and the SAM) and in the male inflorescence. Expressed at high level in the female inflorescence.

Its subcellular location is the nucleus. Probable transcription factor required to initiate organ founder cells in a lateral domain of shoot meristems. Involved in leaf formation. This chain is WUSCHEL-related homeobox 3B (WOX3B), found in Zea mays (Maize).